The primary structure comprises 148 residues: uncharacterized protein (148 aa).

A helical membrane pass occupies residues 22–40 (YFLSLTVVISIIHLFTTCV). Residues 43 to 141 (HNHSTHFPYL…YYPISRHYLH (99 aa)) form a histidine-rich region.

It localises to the host membrane. This is an uncharacterized protein from African swine fever virus (strain Badajoz 1971 Vero-adapted) (Ba71V).